The chain runs to 328 residues: Probable cell division protein WhiA (328 aa).

Residues Ser273 to Ser306 constitute a DNA-binding region (H-T-H motif).

Belongs to the WhiA family. Monomer in solution.

Functionally, involved in cell division and chromosome segregation. Involved in sporulation. May coordinate the cessation of aerial hyphae growth and subsequent chromosome segregation and/or septation. Required for expression of the ParB partioning protein during sporogenesis. Activates its own transcription and represses WhiB. Binds with low affinity to its own promoter and to the Parp2 sporulation-specific promoter. Also binds directly to the RNA polymerase sigma factor WhiG, leading to inhibition of WhiG-dependent transcription in a dose-dependent manner. This chain is Probable cell division protein WhiA, found in Streptomyces coelicolor (strain ATCC BAA-471 / A3(2) / M145).